The sequence spans 392 residues: Protein O-glucosyltransferase 1 (392 aa).

An N-terminal signal peptide occupies residues 1-23; sequence MERRAGSRLRAWMLLLLLCPVQG. Intrachain disulfides connect Cys49–Cys56, Cys54–Cys357, Cys102–Cys108, and Cys263–Cys286. A glycan (N-linked (GlcNAc...) asparagine) is linked at Asn53. The interval 103–107 is interaction with the consensus sequence C-X-S-X-[PA]-C in peptide substrates; sequence MFPSR. The active-site Proton donor/acceptor is Asp133. An interaction with the consensus sequence C-X-S-X-[PA]-C in peptide substrates region spans residues 172–178; it reads AVWPLYP. Tyr177 serves as a coordination point for UDP-alpha-D-glucose. Asn204 carries an N-linked (GlcNAc...) asparagine glycan. UDP-alpha-D-glucose-binding positions include Ser212, Arg218, and 274-279; that span reads VAASFR. Residue Asn373 is glycosylated (N-linked (GlcNAc...) asparagine). A Prevents secretion from ER motif is present at residues 389–392; that stretch reads KTEL.

The protein belongs to the glycosyltransferase 90 family. Widely expressed in newborn and adult tissues (at protein level).

It localises to the endoplasmic reticulum lumen. It carries out the reaction L-seryl-[EGF-like domain protein] + UDP-alpha-D-xylose = 3-O-(beta-D-xylosyl)-L-seryl-[EGF-like domain protein] + UDP + H(+). The catalysed reaction is L-seryl-[EGF-like domain protein] + UDP-alpha-D-glucose = 3-O-(beta-D-glucosyl)-L-seryl-[EGF-like domain protein] + UDP + H(+). The protein operates within protein modification; protein glycosylation. In terms of biological role, dual specificity glycosyltransferase that catalyzes the transfer of glucose and xylose from UDP-glucose and UDP-xylose, respectively, to a serine residue found in the consensus sequence of C-X-S-X-P-C. Specifically targets extracellular EGF repeats of protein such as CRB2, F7, F9 and NOTCH2. Acts as a positive regulator of Notch signaling by mediating O-glucosylation of Notch, leading to regulate muscle development. Notch glucosylation does not affect Notch ligand binding. Required during early development to promote gastrulation: acts by mediating O-glucosylation of CRB2, which is required for CRB2 localization to the cell membrane. The sequence is that of Protein O-glucosyltransferase 1 from Mus musculus (Mouse).